The chain runs to 495 residues: DNA double-strand break repair helicase HerA (495 aa).

ATP contacts are provided by residues Arg-141, 150–155, and 458–459; these read GSGKSN and KI.

The protein belongs to the HerA family. As to quaternary structure, forms a hexamer or a heptamer. Interacts with Mre11.

It catalyses the reaction Couples ATP hydrolysis with the unwinding of duplex DNA at the replication fork by translocating in the 5'-3' direction. This creates two antiparallel DNA single strands (ssDNA). The leading ssDNA polymer is the template for DNA polymerase III holoenzyme which synthesizes a continuous strand.. It carries out the reaction ATP + H2O = ADP + phosphate + H(+). The catalysed reaction is Couples ATP hydrolysis with the unwinding of duplex DNA by translocating in the 3'-5' direction.. ATPase activity is slightly stimulated by either circular single- or double-stranded (ds)DNA with a weak preference for dsDNA. Helicase activity is stimulated by Mre11. Involved in DNA double-strand break (DSB) repair. Probably acts with NurA to stimulate resection of the 5' strand and produce the long 3' single-strand that is required for RadA loading. Has DNA-dependent ATPase activity and bidirectional DNA helicase activity. Loads on either a 3' or a 5' DNA tail for subsequent DNA unwinding. Can also unwind blunt-ended dsDNA, Holliday junction and splayed-arm DNA. The protein is DNA double-strand break repair helicase HerA of Sulfurisphaera tokodaii (strain DSM 16993 / JCM 10545 / NBRC 100140 / 7) (Sulfolobus tokodaii).